A 135-amino-acid polypeptide reads, in one-letter code: UPF0355 protein SE_2351 (135 aa).

It belongs to the UPF0355 family.

This is UPF0355 protein SE_2351 from Staphylococcus epidermidis (strain ATCC 12228 / FDA PCI 1200).